A 220-amino-acid polypeptide reads, in one-letter code: Large ribosomal subunit protein uL3 (220 aa).

The tract at residues 113 to 143 (GTTKGHGYQGNIHKDGQRRGPMAHGSRYHRR) is disordered.

Belongs to the universal ribosomal protein uL3 family. In terms of assembly, part of the 50S ribosomal subunit. Forms a cluster with proteins L14 and L19.

Functionally, one of the primary rRNA binding proteins, it binds directly near the 3'-end of the 23S rRNA, where it nucleates assembly of the 50S subunit. The chain is Large ribosomal subunit protein uL3 from Limosilactobacillus fermentum (strain NBRC 3956 / LMG 18251) (Lactobacillus fermentum).